The following is a 432-amino-acid chain: Glutamate-1-semialdehyde 2,1-aminomutase (432 aa).

An N6-(pyridoxal phosphate)lysine modification is found at Lys270.

The protein belongs to the class-III pyridoxal-phosphate-dependent aminotransferase family. HemL subfamily. Homodimer. Pyridoxal 5'-phosphate is required as a cofactor.

The protein resides in the cytoplasm. It carries out the reaction (S)-4-amino-5-oxopentanoate = 5-aminolevulinate. The protein operates within porphyrin-containing compound metabolism; protoporphyrin-IX biosynthesis; 5-aminolevulinate from L-glutamyl-tRNA(Glu): step 2/2. In Acinetobacter baumannii (strain ACICU), this protein is Glutamate-1-semialdehyde 2,1-aminomutase.